We begin with the raw amino-acid sequence, 1024 residues long: Multidrug resistance protein MdtC (1024 aa).

12 helical membrane-spanning segments follow: residues 12 to 32 (VATT…FSLL), 333 to 353 (EVER…FIFL), 360 to 380 (LIPA…MYLC), 387 to 407 (LSLM…IVVL), 435 to 455 (VLSM…MAGL), 469 to 489 (VAIG…CAWL), 528 to 548 (WVMV…ISIP), 853 to 873 (LWLI…LYES), 875 to 895 (VHPL…LLAL), 897 to 917 (LFDA…IGIV), 953 to 973 (PIIM…LSSG), and 984 to 1004 (ITIV…TPVI).

This sequence belongs to the resistance-nodulation-cell division (RND) (TC 2.A.6) family. MdtC subfamily. Part of a tripartite efflux system composed of MdtA, MdtB and MdtC. MdtC forms a heteromultimer with MdtB.

It localises to the cell inner membrane. The polypeptide is Multidrug resistance protein MdtC (Yersinia pestis bv. Antiqua (strain Antiqua)).